The primary structure comprises 115 residues: U3-lycotoxin-Ls1q (115 aa).

Residues 1–20 (MKFVLLFGVLLVTLFSYSSA) form the signal peptide. The propeptide occupies 21–44 (EMFDDFDQADEDELLSLIEKEEAR). Disulfide bonds link Cys48/Cys63, Cys55/Cys72, Cys62/Cys87, and Cys74/Cys85.

It belongs to the neurotoxin 19 (CSTX) family. 01 subfamily. Expressed by the venom gland.

It localises to the secreted. This is U3-lycotoxin-Ls1q from Lycosa singoriensis (Wolf spider).